We begin with the raw amino-acid sequence, 448 residues long: MKPVIAIVGRPNVGKSTLFNRLTGRRDAIVADFAGLTRDRHYGDGKLDNHEFIVIDTGGFEPDSTSGIYKEMAKQTRQAVAEADAVVFVVDVRAGLSAQDHDIARYLRATGKRVLLAANKAEGMKDGPQLAEFYELGMGEPLAVSSAHGQGVRSLIEMALEGIEPPEPEEGYSEEELRNRPTRLAVAGRPNVGKSTLINTWLGEERLVAFDLPGTTRDAIHVPFERGDKKYELIDTAGLRRKGKVFESIEKFSVVKTLQAISDANVVLLLIDATEGVSDQDAHIAGYVLDAGRAVVIAINKWDAIDSYQRETLQRSIEQRLAFLKFAPVLMISAKKRQGLGPLWKAIDDAWASATRKLPTPQLTRLLLEAVEYQQPKRAGAVRPKLRYAHQGGQNPPIIVIHGNAVEHVTEVYKRYLEARFREHFKLVGTPMRIELRASHNPFVSKDS.

2 consecutive EngA-type G domains span residues 3 to 167 and 182 to 355; these read PVIA…EPPE and TRLA…ASAT. GTP-binding positions include 9 to 16, 56 to 60, 119 to 122, 188 to 195, 235 to 239, and 300 to 303; these read GRPNVGKS, DTGGF, NKAE, DTAGL, and NKWD. Residues 356–440 enclose the KH-like domain; that stretch reads RKLPTPQLTR…PMRIELRASH (85 aa).

This sequence belongs to the TRAFAC class TrmE-Era-EngA-EngB-Septin-like GTPase superfamily. EngA (Der) GTPase family. Associates with the 50S ribosomal subunit.

GTPase that plays an essential role in the late steps of ribosome biogenesis. This Leptothrix cholodnii (strain ATCC 51168 / LMG 8142 / SP-6) (Leptothrix discophora (strain SP-6)) protein is GTPase Der.